Reading from the N-terminus, the 434-residue chain is Putative peptidase B (434 aa).

Lys198 and Asp203 together coordinate Mn(2+). The active site involves Lys210. Mn(2+)-binding residues include Asp221, Asp280, and Glu282. Arg284 is a catalytic residue.

This sequence belongs to the peptidase M17 family. As to quaternary structure, homohexamer. The cofactor is Mn(2+).

Its subcellular location is the cytoplasm. The catalysed reaction is Release of an N-terminal amino acid, Xaa, from a peptide or arylamide. Xaa is preferably Glu or Asp but may be other amino acids, including Leu, Met, His, Cys and Gln.. Functionally, probably plays an important role in intracellular peptide degradation. The polypeptide is Putative peptidase B (Haemophilus influenzae (strain ATCC 51907 / DSM 11121 / KW20 / Rd)).